The primary structure comprises 518 residues: Sensory neuron membrane protein 1 (518 aa).

The Cytoplasmic segment spans residues 1-8; that stretch reads MKTAEKLG. The helical transmembrane segment at 9–29 threads the bilayer; it reads IIGTTISIFGIGFGWGVFPWL. The Extracellular portion of the chain corresponds to 30-456; it reads IRMQIGRVSL…ELFRILQFLD (427 aa). N-linked (GlcNAc...) asparagine glycans are attached at residues Asn-64, Asn-186, Asn-225, Asn-316, Asn-334, and Asn-381. Disulfide bonds link Cys-265–Cys-330, Cys-294–Cys-349, and Cys-332–Cys-338. A helical membrane pass occupies residues 457-477; it reads VIKWVITLFGAGVVSGGVGLY. The Cytoplasmic portion of the chain corresponds to 478-518; that stretch reads YKEKNSLPITPTSSATSKKIDNPTDKTTTHELGHTNFGYIN.

Belongs to the CD36 family.

It is found in the cell membrane. Its function is as follows. Plays an olfactory role that is not restricted to pheromone sensitivity. The polypeptide is Sensory neuron membrane protein 1 (Pediculus humanus subsp. corporis (Body louse)).